The primary structure comprises 376 residues: Chaperone protein DnaJ (376 aa).

Residues 5–70 enclose the J domain; sequence DYYEILGVER…QKRAAYDKFG (66 aa). The segment at 131 to 209 adopts a CR-type zinc-finger fold; that stretch reads GVSKEIKVPT…CHGDGRVQKT (79 aa). Residues C144, C147, C161, C164, C183, C186, C197, and C200 each contribute to the Zn(2+) site. CXXCXGXG motif repeat units follow at residues 144–151, 161–168, 183–190, and 197–204; these read CDECHGSG, CPTCHGSG, CPHCHGKG, and CRKCHGDG.

The protein belongs to the DnaJ family. In terms of assembly, homodimer. Zn(2+) is required as a cofactor.

Its subcellular location is the cytoplasm. Its function is as follows. Participates actively in the response to hyperosmotic and heat shock by preventing the aggregation of stress-denatured proteins and by disaggregating proteins, also in an autonomous, DnaK-independent fashion. Unfolded proteins bind initially to DnaJ; upon interaction with the DnaJ-bound protein, DnaK hydrolyzes its bound ATP, resulting in the formation of a stable complex. GrpE releases ADP from DnaK; ATP binding to DnaK triggers the release of the substrate protein, thus completing the reaction cycle. Several rounds of ATP-dependent interactions between DnaJ, DnaK and GrpE are required for fully efficient folding. Also involved, together with DnaK and GrpE, in the DNA replication of plasmids through activation of initiation proteins. The protein is Chaperone protein DnaJ of Tolumonas auensis (strain DSM 9187 / NBRC 110442 / TA 4).